Reading from the N-terminus, the 358-residue chain is Protein SGT1 homolog B (358 aa).

TPR repeat units lie at residues 2–35 (AKEL…DPNC), 37–69 (AFFA…EPTL), and 70–103 (AKAY…APNE). Residues 157–246 (KPMFRHEFYQ…AEIITWASLE (90 aa)) enclose the CS domain. Residues 255–275 (PKPNVSSALSQRPVYPSSKPA) form a disordered region. One can recognise an SGS domain in the interval 268–358 (VYPSSKPAKD…DGMELKKWEY (91 aa)).

It belongs to the SGT1 family. Interacts with RAR1 and HSP90-2. Interacts (via SGS domain) with HSC70-1 and HSC70-3.

The protein localises to the cytoplasm. It localises to the nucleus. In terms of biological role, involved in plant innate immunity. Essential for race-specific resistance conferred by multiple R genes, including RPP7, recognizing different oomycete pathogen isolates like avirulent Hyaloperonospora arabidopsidis (downy mildew). Contributes additively with RAR1 to RPP5-dependent resistance. Not required for RPM1, RPS2, RPS4 and RPS5-mediated resistance. Functions as a negative regulator of RPS5 accumulation by assisting its degradation. May be involved in heat shock response by associating with HSC70-1 chaperone. Required for the SCF(TIR1)-mediated degradation of Aux/IAA proteins, but maybe not for SCF(TIR1) assembly or binding to its Aux/IAA substrates. Probably required for SCF-mediated ubiquitination, by coupling HSP90 to SCF complex for ubiquitination of HSP90 client proteins. Required for the coronatine/jasmonic acid-mediated signal transduction pathway. The chain is Protein SGT1 homolog B from Arabidopsis thaliana (Mouse-ear cress).